Here is a 259-residue protein sequence, read N- to C-terminus: HTH-type quorum sensing-dependent transcriptional regulator VjbR (259 aa).

The tract at residues lysine 76–glycine 179 is C12-HSL binding. One can recognise an HTH luxR-type domain in the interval alanine 183–glycine 248. A DNA-binding region (H-T-H motif) is located at residues aspartate 207–glutamine 226.

Transcriptional regulator involved in the global control of Brucella gene expression. Mediates the effects of the quorum sensing autoinducer C12-HSL (N-dodecanoyl-homoserine lactone) on a large and diverse number of genes. This chain is HTH-type quorum sensing-dependent transcriptional regulator VjbR (vjbR), found in Brucella suis biovar 1 (strain 1330).